The following is a 295-amino-acid chain: UDP-N-acetylenolpyruvoylglucosamine reductase (295 aa).

The FAD-binding PCMH-type domain occupies 23–188 (QVGGPADFLA…ISAKFALKPG (166 aa)). Arg167 is a catalytic residue. Ser217 acts as the Proton donor in catalysis. The active site involves Glu287.

Belongs to the MurB family. FAD is required as a cofactor.

Its subcellular location is the cytoplasm. The catalysed reaction is UDP-N-acetyl-alpha-D-muramate + NADP(+) = UDP-N-acetyl-3-O-(1-carboxyvinyl)-alpha-D-glucosamine + NADPH + H(+). Its pathway is cell wall biogenesis; peptidoglycan biosynthesis. Cell wall formation. This is UDP-N-acetylenolpyruvoylglucosamine reductase from Streptococcus equi subsp. zooepidemicus (strain H70).